A 172-amino-acid chain; its full sequence is Thioredoxin M5, chloroplastic (172 aa).

A chloroplast-targeting transit peptide spans 1-59 (MALETCFRAWATLHAPQPPSSGGSRDRLLLSGAGSSQSKPRLSVASPSPLRPASRFACQ). Residues 17–47 (QPPSSGGSRDRLLLSGAGSSQSKPRLSVASP) form a disordered region. Residues 60–171 (CSNVVDEVVV…LATIIDKYVS (112 aa)) form the Thioredoxin domain. Catalysis depends on nucleophile residues Cys-95 and Cys-98. The cysteines at positions 95 and 98 are disulfide-linked.

It belongs to the thioredoxin family. Plant M-type subfamily. Expressed in leaves and at lower levels in flowers.

It is found in the plastid. The protein resides in the chloroplast. In terms of biological role, thiol-disulfide oxidoreductase probably involved in the redox regulation of chloroplastic enzymes. Required for chloroplast biogenesis and differentiation. Functions as an electron donor for plastidial 2-Cys peroxiredoxins and participates in hydrogen peroxide scavenging system in chloroplasts. Possesses reducing activity towards insulin disulfide bonds. The protein is Thioredoxin M5, chloroplastic (TRXM) of Oryza sativa subsp. japonica (Rice).